The primary structure comprises 156 residues: Acyl carrier protein, mitochondrial (156 aa).

A mitochondrion-targeting transit peptide spans 1–68 (MASRVLSAYV…GRVTQLCRQY (68 aa)). The region spanning 77-152 (EGIQDRVLYV…EIVDYIADKK (76 aa)) is the Carrier domain. Lys88 is modified (N6-acetyllysine). The residue at position 112 (Ser112) is an O-(pantetheine 4'-phosphoryl)serine.

The protein belongs to the acyl carrier protein (ACP) family. Mammalian complex I is composed of 45 different subunits. Interacts with ETFRF1. Identified in a complex composed of MALSU1, MIEF1 upstream open reading frame protein and NDUFAB1; within the trimeric complex, MIEF1 upstream open reading frame protein functions as a bridging scaffold that interacts with MALSU1 on one side, and with NDUFAB1 on the other side. The complex interacts with the mitochondrial large ribosomal subunit. Interacts with alpha-1-microglobulin chain; this interaction is required for the maintenance of mitochondrial redox homeostasis. Component of the mitochondrial core iron-sulfur cluster (ISC) complex composed of NFS1, LYRM4, NDUFAB1, ISCU, FXN, and FDX2; this complex is a heterohexamer containing two copies of each monomer. Component of the cyteine desulfurase complex composed of NFS1, LYRM4 and NDUFAB1; this complex contributes to the stability and cysteine desulfurase activity of NFS1. In terms of processing, phosphopantetheinylation at Ser-112 is essential for interactions with LYR motif-containing proteins.

It localises to the mitochondrion. In terms of biological role, carrier of the growing fatty acid chain in fatty acid biosynthesis. Accessory and non-catalytic subunit of the mitochondrial membrane respiratory chain NADH dehydrogenase (Complex I), which functions in the transfer of electrons from NADH to the respiratory chain. Accessory protein, of the core iron-sulfur cluster (ISC) assembly complex, that regulates, in association with LYRM4, the stability and the cysteine desulfurase activity of NFS1 and participates in the [2Fe-2S] clusters assembly on the scaffolding protein ISCU. The core iron-sulfur cluster (ISC) assembly complex is involved in the de novo synthesis of a [2Fe-2S] cluster, the first step of the mitochondrial iron-sulfur protein biogenesis. This process is initiated by the cysteine desulfurase complex (NFS1:LYRM4:NDUFAB1) that produces persulfide which is delivered on the scaffold protein ISCU in a FXN-dependent manner. Then this complex is stabilized by FDX2 which provides reducing equivalents to accomplish the [2Fe-2S] cluster assembly. Finally, the [2Fe-2S] cluster is transferred from ISCU to chaperone proteins, including HSCB, HSPA9 and GLRX5. In Pongo pygmaeus (Bornean orangutan), this protein is Acyl carrier protein, mitochondrial.